The chain runs to 233 residues: Serine-rich 25 kDa antigen protein (233 aa).

A disordered region spans residues 35–219 (KNEASPEKLE…DNNNLDAASS (185 aa)). The segment covering 38-53 (ASPEKLEEAEEKEKSS) has biased composition (basic and acidic residues). Residues 61-71 (SNEDNEDDEDE) are compositionally biased toward acidic residues. 10 tandem repeats follow at residues 82–93 (SSSDKPDNKPEA), 102–113 (SSSDKPDNKPEA), 114–125 (SSSDKPDNKPEA), 126–137 (SSSDKPDNKPEA), 138–149 (SSSDKPDNKPEA), 150–161 (SSSDKPDNKPEA), 162–169 (SSTNKPEA), 170–177 (SSTNKPEA), 178–185 (SSTNKPEA), and 186–193 (SSTNKPEA). Positions 82-161 (SSSDKPDNKP…SDKPDNKPEA (80 aa)) are 6 X 12 AA tandem repeats of S-S-S-D-K-P-D-N-K-P-E-A. Basic and acidic residues predominate over residues 83-159 (SSDKPDNKPE…SSSDKPDNKP (77 aa)). Positions 160 to 192 (EASSTNKPEASSTNKPEASSTNKPEASSTNKPE) are enriched in polar residues. The segment at 162-193 (SSTNKPEASSTNKPEASSTNKPEASSTNKPEA) is 4 X 8 AA tandem repeats of S-S-T-N-K-P-E-A. Positions 193–219 (ASSTSNSNDKSGSSSDNDNNNLDAASS) are enriched in low complexity.

Post-translationally, phosphorylated on serine residue(s). In terms of processing, O-glycosylated; glycans consist of single N-acetylglucosamine residues. O-acylated; acyl group is probably palmitate, not myristate.

The protein resides in the cell membrane. Its function is as follows. Plays a role in the adhesion to host cells. Involved in the adhesion to host apoptotic cells thereby facilitating their phagocytosis. This chain is Serine-rich 25 kDa antigen protein, found in Entamoeba histolytica (strain ATCC 30459 / HM-1:IMSS / ABRM).